The sequence spans 155 residues: Photosystem II extrinsic protein V (155 aa).

The signal sequence occupies residues 1–20; the sequence is MFVKMIGWLVLFLFAHQTWA. Positions 50, 53, 54, and 105 each coordinate heme c.

The protein belongs to the cytochrome c family. PsbV subfamily. As to quaternary structure, PSII is composed of 1 copy each of membrane proteins PsbA, PsbB, PsbC, PsbD, PsbE, PsbF, PsbH, PsbI, PsbJ, PsbK, PsbL, PsbM, PsbT, PsbY, PsbZ, Psb30/Ycf12, at least 3 peripheral proteins of the oxygen-evolving complex and a large number of cofactors. It forms dimeric complexes. The extrinsic subunits in red algae are PsbO (OEC33), PsbQ', cytochrome c-550 and PsbU. The cofactor is heme c.

The protein localises to the plastid. It is found in the chloroplast thylakoid membrane. Functionally, one of the extrinsic, lumenal subunits of photosystem II (PSII). PSII is a light-driven water plastoquinone oxidoreductase, using light energy to abstract electrons from H(2)O, generating a proton gradient subsequently used for ATP formation. The extrinsic proteins stabilize the structure of photosystem II oxygen-evolving complex (OEC), the ion environment of oxygen evolution and protect the OEC against heat-induced inactivation. Unlike the T.vulcanus ortholog, it does not bind by itself to PSII, but requires all extrinsic members of the OEC. This is Photosystem II extrinsic protein V from Cyanidium caldarium (Red alga).